We begin with the raw amino-acid sequence, 228 residues long: ATP-dependent dethiobiotin synthetase BioD (228 aa).

12 to 17 contacts ATP; it reads EIGKTT. Thr16 provides a ligand contact to Mg(2+). Lys37 is an active-site residue. Residue Ser41 participates in substrate binding. ATP contacts are provided by residues Asp54, 116 to 119, and 205 to 207; these read EGAG and PRL. The Mg(2+) site is built by Asp54 and Glu116.

The protein belongs to the dethiobiotin synthetase family. In terms of assembly, homodimer. The cofactor is Mg(2+).

The protein localises to the cytoplasm. It catalyses the reaction (7R,8S)-7,8-diammoniononanoate + CO2 + ATP = (4R,5S)-dethiobiotin + ADP + phosphate + 3 H(+). The protein operates within cofactor biosynthesis; biotin biosynthesis; biotin from 7,8-diaminononanoate: step 1/2. Catalyzes a mechanistically unusual reaction, the ATP-dependent insertion of CO2 between the N7 and N8 nitrogen atoms of 7,8-diaminopelargonic acid (DAPA, also called 7,8-diammoniononanoate) to form a ureido ring. This is ATP-dependent dethiobiotin synthetase BioD from Pseudomonas aeruginosa (strain UCBPP-PA14).